Consider the following 141-residue polypeptide: Hemoglobin subunit alpha (141 aa).

The Globin domain occupies 1–141; sequence VLSPADKTNV…VSTVLTSKYR (141 aa). At Ser3 the chain carries Phosphoserine. At Lys7 the chain carries N6-succinyllysine. Thr8 bears the Phosphothreonine mark. Lys11 is modified (N6-succinyllysine). At Lys16 the chain carries N6-acetyllysine; alternate. N6-succinyllysine; alternate is present on Lys16. Tyr24 bears the Phosphotyrosine mark. Residue Ser35 is modified to Phosphoserine. Lys40 carries the post-translational modification N6-succinyllysine. Ser49 is modified (phosphoserine). Residue His58 coordinates O2. Heme b is bound at residue His87. Phosphoserine is present on Ser102. Residue Thr108 is modified to Phosphothreonine. Ser124 bears the Phosphoserine mark. 2 positions are modified to phosphothreonine: Thr134 and Thr137. Ser138 bears the Phosphoserine mark.

The protein belongs to the globin family. Heterotetramer of two alpha chains and two beta chains. In terms of tissue distribution, red blood cells.

Its function is as follows. Involved in oxygen transport from the lung to the various peripheral tissues. Functionally, hemopressin acts as an antagonist peptide of the cannabinoid receptor CNR1. Hemopressin-binding efficiently blocks cannabinoid receptor CNR1 and subsequent signaling. This chain is Hemoglobin subunit alpha (HBA), found in Lutra lutra (European river otter).